Here is a 369-residue protein sequence, read N- to C-terminus: Anhydro-N-acetylmuramic acid kinase (369 aa).

12–19 serves as a coordination point for ATP; the sequence is GTSMDGVD.

The protein belongs to the anhydro-N-acetylmuramic acid kinase family.

It carries out the reaction 1,6-anhydro-N-acetyl-beta-muramate + ATP + H2O = N-acetyl-D-muramate 6-phosphate + ADP + H(+). It functions in the pathway amino-sugar metabolism; 1,6-anhydro-N-acetylmuramate degradation. The protein operates within cell wall biogenesis; peptidoglycan recycling. In terms of biological role, catalyzes the specific phosphorylation of 1,6-anhydro-N-acetylmuramic acid (anhMurNAc) with the simultaneous cleavage of the 1,6-anhydro ring, generating MurNAc-6-P. Is required for the utilization of anhMurNAc either imported from the medium or derived from its own cell wall murein, and thus plays a role in cell wall recycling. The polypeptide is Anhydro-N-acetylmuramic acid kinase (Shewanella oneidensis (strain ATCC 700550 / JCM 31522 / CIP 106686 / LMG 19005 / NCIMB 14063 / MR-1)).